Here is a 58-residue protein sequence, read N- to C-terminus: Weak neurotoxin D2B (58 aa).

Cystine bridges form between cysteine 3–cysteine 24, cysteine 17–cysteine 41, and cysteine 43–cysteine 54.

As to expression, expressed by the venom gland.

Its subcellular location is the secreted. In terms of biological role, binds to muscle nicotinic acetylcholine receptor (nAChR) and inhibit acetylcholine from binding to the receptor, thereby impairing neuromuscular transmission. This Micrurus pyrrhocryptus (Coral snake) protein is Weak neurotoxin D2B.